The following is a 201-amino-acid chain: Probable nicotinate-nucleotide adenylyltransferase (201 aa).

Belongs to the NadD family.

The enzyme catalyses nicotinate beta-D-ribonucleotide + ATP + H(+) = deamido-NAD(+) + diphosphate. It functions in the pathway cofactor biosynthesis; NAD(+) biosynthesis; deamido-NAD(+) from nicotinate D-ribonucleotide: step 1/1. In terms of biological role, catalyzes the reversible adenylation of nicotinate mononucleotide (NaMN) to nicotinic acid adenine dinucleotide (NaAD). In Bacteroides fragilis (strain YCH46), this protein is Probable nicotinate-nucleotide adenylyltransferase.